The primary structure comprises 1229 residues: Chitin synthase 4 (1229 aa).

The segment at 1-196 (MSLPERPGAK…IVKEGKRKEK (196 aa)) is disordered. The Cytoplasmic segment spans residues 1 to 202 (MSLPERPGAK…RKEKIPEQLR (202 aa)). A compositionally biased stretch (basic residues) spans 18 to 27 (SYRKSPSRRN). A compositionally biased stretch (polar residues) spans 43–66 (GQHQRGPSVNSFAETIRSPNSNIE). The span at 92 to 105 (IRPERNRIDRDHPN) shows a compositional bias: basic and acidic residues. Residues 137-150 (SGPPSGSNSASGSG) show a composition bias toward low complexity. 2 stretches are compositionally biased toward basic and acidic residues: residues 164–177 (SGRETVAEKSDNTR) and 187–196 (IVKEGKRKEK). The chain crosses the membrane as a helical span at residues 203-223 (PPSAWNVYCAVITFWSPDFIM). Residues 224 to 240 (KCCGMPAKAQRRAWREK) lie on the Extracellular side of the membrane. Residues 241-261 (IGLISLILIIMGVVGFLTFGF) traverse the membrane as a helical segment. At 262 to 495 (NQAVCGGPVL…IKVGTVDTDT (234 aa)) the chain is on the cytoplasmic side. Residues 496 to 516 (VGCIAAKVVLYVSLALILSVV) form a helical membrane-spanning segment. Over 517–1054 (GARFTLALIF…LCGTFCFSMQ (538 aa)) the chain is Extracellular. Disordered regions lie at residues 539–589 (TSQT…RSSF) and 601–648 (GAER…DPYA). Over residues 568-581 (GDVGSSVAGASSSD) the composition is skewed to low complexity. Residues asparagine 608, asparagine 635, and asparagine 1030 are each glycosylated (N-linked (GlcNAc...) asparagine). Residues 608-648 (NKSMPTTMASQASGGYMGPSSTAYRETNESRTSFLKSDPYA) show a composition bias toward polar residues. A helical transmembrane segment spans residues 1055–1075 (FVIFIELIGTLVLPAAIAFTF). The Cytoplasmic segment spans residues 1076–1088 (YVVIISIINQPPQ). A helical membrane pass occupies residues 1089–1109 (IIPLVLLGLILGLPAILIIIT). Residues 1110-1114 (AHSWS) are Extracellular-facing. The helical transmembrane segment at 1115–1135 (YVLWMLIYLLSLPVWNFVLPA) threads the bilayer. Residues 1136–1229 (YAFWKFDDFS…QQYDEYYSDA (94 aa)) are Cytoplasmic-facing. The interval 1210–1229 (WASAPPHHHQQQYDEYYSDA) is disordered.

This sequence belongs to the chitin synthase family. Class IV subfamily.

The protein localises to the cell membrane. It catalyses the reaction [(1-&gt;4)-N-acetyl-beta-D-glucosaminyl](n) + UDP-N-acetyl-alpha-D-glucosamine = [(1-&gt;4)-N-acetyl-beta-D-glucosaminyl](n+1) + UDP + H(+). Polymerizes chitin, a structural polymer of the cell wall and septum, by transferring the sugar moiety of UDP-GlcNAc to the non-reducing end of the growing chitin polymer. Might function as a negative regulator on expression of other CHS genes. This is Chitin synthase 4 from Pyricularia oryzae (strain 70-15 / ATCC MYA-4617 / FGSC 8958) (Rice blast fungus).